The sequence spans 333 residues: Serine/threonine-protein phosphatase PP1-beta (333 aa).

The Mn(2+) site is built by Asp63, His65, Asp91, and Asn123. Residue His124 is the Proton donor of the active site. The Mn(2+) site is built by His172 and His247. Positions 306-333 (GAGGVGSNRPVTPPRNAPAAQPKKGAKK) are disordered. Over residues 322-333 (APAAQPKKGAKK) the composition is skewed to low complexity.

Belongs to the PPP phosphatase family. PP-1 subfamily. Interacts with lab-1; the interaction is direct. Interacts with knl-1; the interaction is direct. It depends on Mn(2+) as a cofactor.

The protein resides in the cytoplasm. Its subcellular location is the nucleus. It carries out the reaction O-phospho-L-seryl-[protein] + H2O = L-seryl-[protein] + phosphate. The enzyme catalyses O-phospho-L-threonyl-[protein] + H2O = L-threonyl-[protein] + phosphate. In terms of biological role, serine/threonine-protein phosphatase essential for chromosomal dynamics during meiosis and mitosis. Antagonizes the function of air-2 in the regulation of chromosome cohesion. Dephosphorylates histone H3 at 'Ser-10'. Also involved in the activation of chloride channel clh-3 during cell swelling and meiotic maturation. Essential for embryogenesis. The polypeptide is Serine/threonine-protein phosphatase PP1-beta (gsp-2) (Caenorhabditis briggsae).